The following is a 119-amino-acid chain: Basic phospholipase A2 (119 aa).

Cystine bridges form between Cys-11-Cys-72, Cys-27-Cys-118, Cys-29-Cys-45, Cys-44-Cys-100, Cys-51-Cys-93, Cys-61-Cys-86, and Cys-79-Cys-91. Ca(2+) is bound by residues Tyr-28, Gly-30, and Gly-32. Residue His-48 is part of the active site. Residue Asp-49 coordinates Ca(2+). Residue Asn-82 is glycosylated (N-linked (GlcNAc...) asparagine). Asp-94 is a catalytic residue.

This sequence belongs to the phospholipase A2 family. Group I subfamily. D49 sub-subfamily. Ca(2+) serves as cofactor. In terms of tissue distribution, expressed by the venom gland.

It is found in the secreted. The enzyme catalyses a 1,2-diacyl-sn-glycero-3-phosphocholine + H2O = a 1-acyl-sn-glycero-3-phosphocholine + a fatty acid + H(+). Functionally, snake venom phospholipase A2 (PLA2) that shows weak myotoxicity and induces edema in mice. Shows no cytotoxicity in vitro. Has an anticoagulant effect in vitro. PLA2 catalyzes the calcium-dependent hydrolysis of the 2-acyl groups in 3-sn-phosphoglycerides. The sequence is that of Basic phospholipase A2 from Micrurus mipartitus (Red-tailed coral snake).